Here is a 172-residue protein sequence, read N- to C-terminus: Crossover junction endodeoxyribonuclease RuvC (172 aa).

Catalysis depends on residues Asp-7, Glu-68, and Asp-141. 3 residues coordinate Mg(2+): Asp-7, Glu-68, and Asp-141.

The protein belongs to the RuvC family. Homodimer which binds Holliday junction (HJ) DNA. The HJ becomes 2-fold symmetrical on binding to RuvC with unstacked arms; it has a different conformation from HJ DNA in complex with RuvA. In the full resolvosome a probable DNA-RuvA(4)-RuvB(12)-RuvC(2) complex forms which resolves the HJ. It depends on Mg(2+) as a cofactor.

It is found in the cytoplasm. It catalyses the reaction Endonucleolytic cleavage at a junction such as a reciprocal single-stranded crossover between two homologous DNA duplexes (Holliday junction).. Its function is as follows. The RuvA-RuvB-RuvC complex processes Holliday junction (HJ) DNA during genetic recombination and DNA repair. Endonuclease that resolves HJ intermediates. Cleaves cruciform DNA by making single-stranded nicks across the HJ at symmetrical positions within the homologous arms, yielding a 5'-phosphate and a 3'-hydroxyl group; requires a central core of homology in the junction. The consensus cleavage sequence is 5'-(A/T)TT(C/G)-3'. Cleavage occurs on the 3'-side of the TT dinucleotide at the point of strand exchange. HJ branch migration catalyzed by RuvA-RuvB allows RuvC to scan DNA until it finds its consensus sequence, where it cleaves and resolves the cruciform DNA. The polypeptide is Crossover junction endodeoxyribonuclease RuvC (Frankia casuarinae (strain DSM 45818 / CECT 9043 / HFP020203 / CcI3)).